The primary structure comprises 684 residues: Protein real-time (684 aa).

The PRELI/MSF1 domain occupies 2–178 (VQKYESPVRI…FVNELKQEGI (177 aa)). The CRAL-TRIO domain occupies 297-474 (TPAVVEKYFP…FLGGSCNVID (178 aa)). The 148-residue stretch at 537-684 (HHGLYKAVDL…GFSSNSLQSR (148 aa)) folds into the GOLD domain.

Its subcellular location is the mitochondrion. The polypeptide is Protein real-time (Anopheles gambiae (African malaria mosquito)).